A 194-amino-acid chain; its full sequence is Calcium channel flower (194 aa).

3 helical membrane-spanning segments follow: residues 34–54 (LLGIVAAFFAILFGLWNVFSI), 59–79 (VSCLVAGIIQMVAGFVVMLLE), and 107–127 (GLYIAMAIPPIILCFGLASLF).

This sequence belongs to the calcium channel flower family. As to quaternary structure, homomultimer. Associates with the dally/ magu complex.

Its subcellular location is the cell membrane. The protein localises to the cytoplasmic vesicle. It is found in the secretory vesicle. The protein resides in the synaptic vesicle membrane. It localises to the presynaptic cell membrane. Its subcellular location is the endosome. Channel activity is inhibited by La(3+), which reduces Ca(2+) influx and thus inhibits it's function in promoting activity-dependent bulk endocytosis (ADBE) in response to high stimuli. Transmembrane protein which mediates synaptic endocytosis, fitness-based cell culling, neuronal culling, morphogen gradient scaling, and calcium transport. Regulates synaptic endocytosis and hence couples exo- with endocytosis. Controls two major modes of synaptic vesicle (SV) endocytosis in the synaptic boutons of neuromuscular junctions (NMJs); Ca(2+) channel-independent Clathrin-mediated endocytosis (CME) in response to mild stimulation, and Ca(2+) channel-dependent activity-dependent bulk endocytosis (ADBE) in response to strong stimulation. Functions in ADBE and subsequent SV reformation from bulk endosomes by initiating Ca(2+) channel-dependent phosphatidylinositol 4,5-bisphosphate (PtdIns(4,5)P2) compartmentalization in synaptic boutons. There it acts at the periactive zone to provide the low Ca(2+) levels required to initiate Calcineurin activation and upregulate PtdIns(4,5)P2. Conversely PtdIns(4,5)P2 enhances fwe Ca(2+) channel-activity, establishing a positive feedback loop that induces PtdIns(4,5)P2 microdomain at the periactive zone. These microdomains trigger bulk membrane invagination (i.e. ADBE) by triggering actin polymerization while also promoting localization of fwe to bulk endosomes, thereby removing the ADBE trigger to reduce endocytosis and prevent excess membrane uptake. PtdIns(4,5)P2 then promotes SV reformation from the bulk endosomes, to coordinate ADBE and subsequent SV reformation. Different combinations of the flower isoforms at the cell membrane are also required for the identification and elimination of suboptimal or supernumerary cells during development, regeneration, and adulthood. Required for the recognition and elimination of unfit cells in the developing wing during cell competition. In the developing pupal retina, mediates the elimination of unwanted postmitotic neurons, including supernumerary photoreceptor neurons that form at the periphery of the retina and are contained within incomplete ommatidia units. Also required for efficient elimination and replacement of old neurons by newly generated neurons during regeneration in the adult brain following mechanical injury. Downstream of the flower fitness fingerprints, cells identified as unwanted or unfit are eliminated via apoptosis through the expression of ahuizotl (azot). However, the cells marked for elimination by the flower isoforms only undergo apoptosis if additional thresholds are met; (1) their neighboring fit/healthy cells express different levels of the fwe isoforms, and (2) the levels of the protective signal SPARC expressed by the loser or unwanted cells are unable to inhibit caspase activation. These additional thresholds for flower-mediated apoptosis, allows useful cells to recover from transient and limited stress before they are unnecessarily eliminated. Functions with dally and magu in a mechanism of scaling, which utilises apoptosis to ensure that the dpp morphogen gradient, which mediates organ growth, remains proportional to the size of the growing wing. In this mechanism, fwe represses dally- and Magu-dependent activity in expanding the gradient, and dally/Magu inhibits fwe-dependent apoptosis to keep cell death rate low. When the levels of these different proteins are optimally regulated the gradient correctly scales with organ growth but when this fails, fwe-mediated apoptosis is activated to trim the developing tissue to match the correct size of the gradient. The protein is Calcium channel flower of Drosophila erecta (Fruit fly).